Reading from the N-terminus, the 188-residue chain is F-box only protein 36 (188 aa).

Residues 91–137 (FDFLERLSDDLLLTIISYLDLEDIARLCQTSHRFAKLCMSDKLWEQI) enclose the F-box domain.

Directly interacts with SKP1 and CUL1.

Substrate-recognition component of the SCF (SKP1-CUL1-F-box protein)-type E3 ubiquitin ligase complex. The chain is F-box only protein 36 (FBXO36) from Homo sapiens (Human).